A 203-amino-acid polypeptide reads, in one-letter code: Enterotoxin-like toxin X (203 aa).

The tract at residues 164-180 (YTLESHKELQKNRENVE) is sialic acid-binding motif.

The protein belongs to the staphylococcal/streptococcal toxin family.

It localises to the secreted. Plays a role in the inhibition of the host innate immune system. Inhibits phagocytosis and killing by human neutrophils by interacting with multiple neutrophil surface glycoproteins in a sialic acid-dependent manner. This chain is Enterotoxin-like toxin X, found in Staphylococcus aureus.